Here is a 696-residue protein sequence, read N- to C-terminus: Elongation factor G 2 (696 aa).

The 277-residue stretch at 5–281 folds into the tr-type G domain; it reads SKYRNIGIFA…AVVDYLPSPT (277 aa). GTP is bound by residues 14 to 21, 78 to 82, and 132 to 135; these read AHVDAGKT, DTPGH, and NKLD.

It belongs to the TRAFAC class translation factor GTPase superfamily. Classic translation factor GTPase family. EF-G/EF-2 subfamily.

It localises to the cytoplasm. Its function is as follows. Catalyzes the GTP-dependent ribosomal translocation step during translation elongation. During this step, the ribosome changes from the pre-translocational (PRE) to the post-translocational (POST) state as the newly formed A-site-bound peptidyl-tRNA and P-site-bound deacylated tRNA move to the P and E sites, respectively. Catalyzes the coordinated movement of the two tRNA molecules, the mRNA and conformational changes in the ribosome. This is Elongation factor G 2 from Vibrio parahaemolyticus serotype O3:K6 (strain RIMD 2210633).